A 218-amino-acid chain; its full sequence is Insulin-induced gene 2 protein (218 aa).

At 1–21 the chain is on the cytoplasmic side; that stretch reads MGETDNAPRGPPSFLPHKMNL. A helical transmembrane segment spans residues 22–44; that stretch reads LLRGLLLFLIGVFLALVLNLLQV. Over 45–63 the chain is Lumenal; that stretch reads QRNVTLFPPDVLSSLFSSA. A helical transmembrane segment spans residues 64 to 81; that stretch reads WWVPLCCGTAAAAIGLLY. Topologically, residues 82–96 are cytoplasmic; it reads PCIDRHLGEPHKFKR. A helical transmembrane segment spans residues 97-119; that stretch reads EWSSVMRCVAVFVGINHASAKVD. At 120–122 the chain is on the lumenal side; that stretch reads FAN. A helical transmembrane segment spans residues 123-141; it reads NTQLSLTLAALSIGLWWTF. At 142–146 the chain is on the cytoplasmic side; sequence DRSRS. The chain crosses the membrane as a helical span at residues 147-168; it reads GLGLGIGISFFATVVSQLLVYN. The Lumenal portion of the chain corresponds to 169-182; the sequence is GVYEYTAPDFLYVR. The helical transmembrane segment at 183-200 threads the bilayer; sequence SWLPCIFFAGGITMGNIG. At 201–218 the chain is on the cytoplasmic side; the sequence is RQLEMYERLALVEKSHRD. The KxHxx signature appears at 212-218; that stretch reads VEKSHRD.

Belongs to the INSIG family. As to quaternary structure, interacts with scap; interaction is direct and only takes place in the presence of sterols; it prevents interaction between scap and the coat protein complex II (COPII). Associates with the SCAP-SREBP complex; association is mediated via its interaction with scap and only takes place in the presence of sterols.

It localises to the endoplasmic reticulum membrane. Its function is as follows. Oxysterol-binding protein that mediates feedback control of cholesterol synthesis by controlling both endoplasmic reticulum to Golgi transport of scap and degradation of hmgcr. Acts as a negative regulator of cholesterol biosynthesis by mediating the retention of the SCAP-SREBP complex in the endoplasmic reticulum, thereby blocking the processing of sterol regulatory element-binding proteins (SREBPs). Binds oxysterol, including 22-hydroxycholesterol, 24-hydroxycholesterol, 25-hydroxycholesterol and 27-hydroxycholesterol, regulating interaction with scap and retention of the SCAP-SREBP complex in the endoplasmic reticulum. In presence of oxysterol, interacts with scap, retaining the SCAP-SREBP complex in the endoplasmic reticulum, thereby preventing scap from escorting SREBPs to the Golgi. Sterol deprivation reduce oxysterol-binding, disrupting the interaction between insig2 and scap, thereby promoting Golgi transport of the SCAP-SREBP complex, followed by processing and nuclear translocation of SREBPs. Also regulates cholesterol synthesis by regulating degradation of hmgcr. This Xenopus tropicalis (Western clawed frog) protein is Insulin-induced gene 2 protein.